We begin with the raw amino-acid sequence, 353 residues long: GTPase Obg (353 aa).

The region spanning 1–159 (MKFVDEVRIH…RDLVLELKLL (159 aa)) is the Obg domain. In terms of domain architecture, OBG-type G spans 160–333 (ADVGIVGYPN…LMDAVGRALY (174 aa)). GTP-binding positions include 166 to 173 (GYPNAGKS), 191 to 195 (FTTLV), 212 to 215 (DIPG), 283 to 286 (TKID), and 314 to 316 (SAV). Residues Ser-173 and Thr-193 each contribute to the Mg(2+) site.

This sequence belongs to the TRAFAC class OBG-HflX-like GTPase superfamily. OBG GTPase family. As to quaternary structure, monomer. Mg(2+) serves as cofactor.

It is found in the cytoplasm. An essential GTPase which binds GTP, GDP and possibly (p)ppGpp with moderate affinity, with high nucleotide exchange rates and a fairly low GTP hydrolysis rate. Plays a role in control of the cell cycle, stress response, ribosome biogenesis and in those bacteria that undergo differentiation, in morphogenesis control. The protein is GTPase Obg of Anaeromyxobacter sp. (strain Fw109-5).